The chain runs to 231 residues: ATP-dependent dethiobiotin synthetase BioD (231 aa).

An ATP-binding site is contributed by 13-18; sequence DVGKTV. Residue Thr17 coordinates Mg(2+). The active site involves Lys38. Residues Asp55, 116 to 119, and 176 to 177 contribute to the ATP site; these read EGAG and NR. Residues Asp55 and Glu116 each coordinate Mg(2+).

Belongs to the dethiobiotin synthetase family. Homodimer. Requires Mg(2+) as cofactor.

Its subcellular location is the cytoplasm. It catalyses the reaction (7R,8S)-7,8-diammoniononanoate + CO2 + ATP = (4R,5S)-dethiobiotin + ADP + phosphate + 3 H(+). The protein operates within cofactor biosynthesis; biotin biosynthesis; biotin from 7,8-diaminononanoate: step 1/2. In terms of biological role, catalyzes a mechanistically unusual reaction, the ATP-dependent insertion of CO2 between the N7 and N8 nitrogen atoms of 7,8-diaminopelargonic acid (DAPA, also called 7,8-diammoniononanoate) to form a ureido ring. The polypeptide is ATP-dependent dethiobiotin synthetase BioD (Vibrio cholerae serotype O1 (strain ATCC 39315 / El Tor Inaba N16961)).